The following is a 1024-amino-acid chain: Gamma-tubulin complex component 5 (1024 aa).

Disordered stretches follow at residues 153–203 (IGLG…GGPQ), 523–545 (NEDKVSDSASASSGSDQGPSSRQ), and 853–873 (SQAKEDIPRDQDTPSQFGPPK). Over residues 189–198 (TPLEEQDHNR) the composition is skewed to basic and acidic residues. The span at 529–543 (DSASASSGSDQGPSS) shows a compositional bias: low complexity. Over residues 853-864 (SQAKEDIPRDQD) the composition is skewed to basic and acidic residues.

This sequence belongs to the TUBGCP family. Component of the gamma-tubulin ring complex (gTuRC) consisting of TUBGCP2, TUBGCP3, TUBGCP4, TUBGCP5 and TUBGCP6 and gamma-tubulin TUBG1 or TUBG2. TUBGCP2, TUBGCP3, TUBGCP4, TUBGCP5 and TUBGCP6 assemble in a 5:5:2:1:1 stoichiometry; each is associated with a gamma-tubulin, thereby arranging 14 gamma-tubulins in a helical manner. Gamma-tubulin at the first position is blocked by TUBGCP3 at the last position, allowing 13 protafilaments to grow into a microtubule. The gTuRC (via TUBGCP3 and TUBGCP6) interacts with ACTB and MZT1; the interactions form a luminal bridge that stabilizes the initial structure during complex assembly. The gTuRC (via TUBGCP2) interacts with MZT2A/MZT2B and CDK5RAP2 (via CM1 motif); the interactions play a role in gTuRC activation.

It is found in the cytoplasm. It localises to the cytoskeleton. The protein resides in the microtubule organizing center. The protein localises to the centrosome. Functionally, component of the gamma-tubulin ring complex (gTuRC) which mediates microtubule nucleation. The gTuRC regulates the minus-end nucleation of alpha-beta tubulin heterodimers that grow into microtubule protafilaments, a critical step in centrosome duplication and spindle formation. The sequence is that of Gamma-tubulin complex component 5 (Tubgcp5) from Mus musculus (Mouse).